The sequence spans 615 residues: DNA mismatch repair protein MutL (615 aa).

Residues 363–397 (FAEPAVREPVAPRYTPAPASGSRPAAPWPNAQPGY) form a disordered region. Residues 378 to 391 (PAPASGSRPAAPWP) are compositionally biased toward low complexity.

This sequence belongs to the DNA mismatch repair MutL/HexB family.

In terms of biological role, this protein is involved in the repair of mismatches in DNA. It is required for dam-dependent methyl-directed DNA mismatch repair. May act as a 'molecular matchmaker', a protein that promotes the formation of a stable complex between two or more DNA-binding proteins in an ATP-dependent manner without itself being part of a final effector complex. This Escherichia coli O157:H7 protein is DNA mismatch repair protein MutL.